The primary structure comprises 737 residues: FYVE, RhoGEF and PH domain-containing protein 3 (737 aa).

Positions 1–151 (MESGGGSSTP…KADKDAGLAQ (151 aa)) are disordered. A compositionally biased stretch (acidic residues) spans 126–136 (ADSDVGEEPDS). Serine 128 carries the phosphoserine modification. In terms of domain architecture, DH spans 157–341 (KLLHIAQELL…STAANHSNAA (185 aa)). Residues 370–469 (ELIKEGQIQK…WIQIIQATIE (100 aa)) form the PH 1 domain. The tract at residues 487-533 (QDEDPSLSPDMPITSTSPVEPVVTTEGGSGAAGLEPRKLSSKTRRDK) is disordered. Over residues 500–512 (TSTSPVEPVVTTE) the composition is skewed to low complexity. Residues 521–533 (EPRKLSSKTRRDK) show a composition bias toward basic and acidic residues. Residues 532-588 (DKEKQSCKSCGETFNSITKRRHHCKLCGVVICGKCSEFKAENSRQSRVCRECFLTQP) form an FYVE-type zinc finger. Zn(2+) contacts are provided by cysteine 538, cysteine 541, cysteine 555, cysteine 558, cysteine 563, cysteine 566, cysteine 580, and cysteine 583. Disordered stretches follow at residues 589–620 (VAPE…SLLC) and 713–737 (AARG…AAAP). One can recognise a PH 2 domain in the interval 616 to 715 (PSLLCGPLRL…WLETLSTAAR (100 aa)).

The protein resides in the cytoplasm. It is found in the cytoskeleton. Its function is as follows. Promotes the formation of filopodia. May activate CDC42, a member of the Ras-like family of Rho- and Rac proteins, by exchanging bound GDP for free GTP. Plays a role in regulating the actin cytoskeleton and cell shape. This Pongo abelii (Sumatran orangutan) protein is FYVE, RhoGEF and PH domain-containing protein 3 (FGD3).